We begin with the raw amino-acid sequence, 217 residues long: Enolase-phosphatase E1 (217 aa).

Residues Asp9 and Glu11 each coordinate Mg(2+). Substrate-binding positions include 112–113 and Lys151; that span reads SS. Asp176 provides a ligand contact to Mg(2+).

Belongs to the HAD-like hydrolase superfamily. MasA/MtnC family. In terms of assembly, monomer. Mg(2+) serves as cofactor.

The protein localises to the cytoplasm. It is found in the nucleus. The catalysed reaction is 5-methylsulfanyl-2,3-dioxopentyl phosphate + H2O = 1,2-dihydroxy-5-(methylsulfanyl)pent-1-en-3-one + phosphate. It functions in the pathway amino-acid biosynthesis; L-methionine biosynthesis via salvage pathway; L-methionine from S-methyl-5-thio-alpha-D-ribose 1-phosphate: step 3/6. The protein operates within amino-acid biosynthesis; L-methionine biosynthesis via salvage pathway; L-methionine from S-methyl-5-thio-alpha-D-ribose 1-phosphate: step 4/6. Its function is as follows. Bifunctional enzyme that catalyzes the enolization of 2,3-diketo-5-methylthiopentyl-1-phosphate (DK-MTP-1-P) into the intermediate 2-hydroxy-3-keto-5-methylthiopentenyl-1-phosphate (HK-MTPenyl-1-P), which is then dephosphorylated to form the acireductone 1,2-dihydroxy-3-keto-5-methylthiopentene (DHK-MTPene). The polypeptide is Enolase-phosphatase E1 (Lachancea thermotolerans (strain ATCC 56472 / CBS 6340 / NRRL Y-8284) (Yeast)).